The following is a 304-amino-acid chain: MEKCTESLPNLNAETSFLRGGNLILQPQVQHPTDDKPPITGQVVPALNTPVMSGPYSGDHIPQFHGNPASVKGFFAQVTTYLRALDISNPADNARVKHFFDYLSQQMQNCDVLSESTQNNLLKQYENFVLELQQSFGEPMTQETTPPMNVTVDKSNISPQDATNFQLHAPNLSYRETNQRDQFQNGQADPTQNEEITDIMDNLPDLITQCIQLDKKHKDRPELLQSESHVPMFASTNHYQSFIGPVRPLPKDGPRQLQGAHLPVTPAKRARQQETQLCVYCNQAGHFTRDCLAKRSRTPARKKM.

Residues 276 to 293 (QLCVYCNQAGHFTRDCLA) form a CCHC-type zinc finger.

In terms of tissue distribution, in adults, expressed in brain, eye, kidney, ovary and testis. Weakly expressed in thymus, heart and muscle.

Involved in cognitive function in the brain, possibly via the noradrenergic system. In Mus musculus (Mouse), this protein is Retrotransposon Gag-like protein 4.